The sequence spans 227 residues: UPF0173 metal-dependent hydrolase BCQ_4418 (227 aa).

This sequence belongs to the UPF0173 family.

The sequence is that of UPF0173 metal-dependent hydrolase BCQ_4418 from Bacillus cereus (strain Q1).